The sequence spans 224 residues: Oxalate oxidase GF-2.8 (224 aa).

The N-terminal stretch at 1–23 (MGYSKTLVAGLFAMLLLAPAVLA) is a signal peptide. A disulfide bridge links cysteine 33 with cysteine 49. The Cupin type-1 domain occupies 63–214 (SKLAKAGNTS…ALRVEARVVE (152 aa)). N-linked (GlcNAc...) asparagine glycosylation is found at asparagine 70 and asparagine 75. Mn(2+) is bound by residues histidine 111, histidine 113, glutamate 118, and histidine 160.

The protein belongs to the germin family. Oligomer (believed to be a pentamer but probably hexamer).

It localises to the secreted. Its subcellular location is the extracellular space. The protein resides in the apoplast. It is found in the cytoplasm. The protein localises to the cell wall. It catalyses the reaction oxalate + O2 + 2 H(+) = H2O2 + 2 CO2. Produces developmental and stress-related release of hydrogen peroxide in the apoplast. May play an important role in several aspects of plant growth and defense mechanisms. The polypeptide is Oxalate oxidase GF-2.8 (Triticum aestivum (Wheat)).